A 725-amino-acid chain; its full sequence is Catalase-peroxidase 1 (725 aa).

Residues 96-224 (WHSAGSYRLA…LAAVQMGLIY (129 aa)) constitute a cross-link (tryptophyl-tyrosyl-methioninium (Trp-Tyr) (with M-250)). Catalysis depends on H97, which acts as the Proton acceptor. Residues 224–250 (YVNPEGVDGNPDPLRTAKDVRETFKRM) constitute a cross-link (tryptophyl-tyrosyl-methioninium (Tyr-Met) (with W-96)). H265 contributes to the heme b binding site.

Belongs to the peroxidase family. Peroxidase/catalase subfamily. As to quaternary structure, homodimer or homotetramer. Heme b is required as a cofactor. Formation of the three residue Trp-Tyr-Met cross-link is important for the catalase, but not the peroxidase activity of the enzyme.

The enzyme catalyses H2O2 + AH2 = A + 2 H2O. It catalyses the reaction 2 H2O2 = O2 + 2 H2O. Its function is as follows. Bifunctional enzyme with both catalase and broad-spectrum peroxidase activity. The sequence is that of Catalase-peroxidase 1 from Idiomarina loihiensis (strain ATCC BAA-735 / DSM 15497 / L2-TR).